We begin with the raw amino-acid sequence, 186 residues long: Peptide deformylase (186 aa).

Fe cation is bound by residues C113 and H156. The active site involves E157. Residue H160 participates in Fe cation binding.

The protein belongs to the polypeptide deformylase family. Requires Fe(2+) as cofactor.

The catalysed reaction is N-terminal N-formyl-L-methionyl-[peptide] + H2O = N-terminal L-methionyl-[peptide] + formate. Its function is as follows. Removes the formyl group from the N-terminal Met of newly synthesized proteins. Requires at least a dipeptide for an efficient rate of reaction. N-terminal L-methionine is a prerequisite for activity but the enzyme has broad specificity at other positions. This chain is Peptide deformylase, found in Lactiplantibacillus plantarum (strain ATCC BAA-793 / NCIMB 8826 / WCFS1) (Lactobacillus plantarum).